Consider the following 1406-residue polypeptide: Protein crumbs homolog 1 (1406 aa).

The N-terminal stretch at 1–25 (MALKNINYLLIFYLSFSLLIYIKNS) is a signal peptide. Topologically, residues 26-1347 (FCNKNNTRCL…DDLISDIFTT (1322 aa)) are extracellular. Asn-30, Asn-41, and Asn-42 each carry an N-linked (GlcNAc...) asparagine glycan. 3 EGF-like domains span residues 30 to 68 (NNTR…KDCD), 70 to 108 (MKDP…TICE), and 110 to 146 (TIGS…RFCE). Disulfide bonds link Cys-34–Cys-45, Cys-39–Cys-54, Cys-56–Cys-67, Cys-74–Cys-85, Cys-79–Cys-96, Cys-98–Cys-107, Cys-114–Cys-125, Cys-119–Cys-134, Cys-136–Cys-145, Cys-152–Cys-163, Cys-157–Cys-172, Cys-174–Cys-183, Cys-190–Cys-201, Cys-195–Cys-210, Cys-212–Cys-221, Cys-228–Cys-239, Cys-233–Cys-248, Cys-250–Cys-259, Cys-266–Cys-277, and Cys-271–Cys-286. Residues 148–184 (DHDECASSPCQNGAVCQDGIDGYSCFCVPGYQGRHCD) form the EGF-like 4; calcium-binding domain. Residues 186 to 222 (EVDECASDPCKNEATCLNEIGRYTCICPHNYSGVNCE) form the EGF-like 5; calcium-binding domain. An N-linked (GlcNAc...) asparagine glycan is attached at Asn-215. In terms of domain architecture, EGF-like 6; calcium-binding spans 224–260 (EIDECWSQPCLNGATCQDALGAYFCDCAPGFLGDHCE). Positions 262 to 299 (NTDECASQPCLHGGLCVDGENRYSCNCTGSGFTGTHCE) constitute an EGF-like 7; calcium-binding domain. A glycan (N-linked (GlcNAc...) asparagine) is linked at Asn-287. Cystine bridges form between Cys-288/Cys-298, Cys-305/Cys-316, Cys-310/Cys-325, Cys-327/Cys-336, Cys-343/Cys-354, Cys-348/Cys-383, Cys-385/Cys-394, Cys-401/Cys-412, Cys-406/Cys-421, Cys-423/Cys-438, Cys-445/Cys-456, Cys-450/Cys-469, and Cys-471/Cys-480. 2 consecutive EGF-like domains span residues 301 to 337 (LMPL…AQCE) and 339 to 395 (DLNE…IHCE). 2 N-linked (GlcNAc...) asparagine glycosylation sites follow: Asn-313 and Asn-322. The EGF-like 10; calcium-binding domain occupies 397 to 439 (DVNECSSNPCQNGGTCENLPGNYTCHCPFDNLSRTFYGGRDCS). Asn-418, Asn-427, and Asn-453 each carry an N-linked (GlcNAc...) asparagine glycan. The EGF-like 11 domain maps to 441 to 481 (ILLGCTHQQCLNNGTCIPHFQDGQHGFSCLCPSGYTGSLCE). The region spanning 485 to 670 (TLSFEGDGFL…GSSLNVKAGC (186 aa)) is the Laminin G-like 1 domain. N-linked (GlcNAc...) asparagine glycans are attached at residues Asn-550, Asn-561, and Asn-657. 4 disulfides stabilise this stretch: Cys-642–Cys-670, Cys-676–Cys-687, Cys-681–Cys-696, and Cys-698–Cys-707. One can recognise an EGF-like 12 domain in the interval 672–708 (RKDWCESQPCQSRGRCINLWLSYQCDCHRPYEGPNCL). A Laminin G-like 2 domain is found at 714–885 (GRFGQDDSTG…PVLVNVTQGC (172 aa)). 3 N-linked (GlcNAc...) asparagine glycosylation sites follow: Asn-757, Asn-871, and Asn-880. Cystine bridges form between Cys-851–Cys-885, Cys-891–Cys-902, Cys-896–Cys-911, Cys-913–Cys-922, Cys-928–Cys-939, and Cys-933–Cys-948. EGF-like domains follow at residues 887 to 923 (GDNS…KACE) and 924 to 960 (EVQW…QSGQ). In terms of domain architecture, Laminin G-like 3 spans 950 to 1137 (ANAVFNGQSG…ISTNSVVTGC (188 aa)). 3 N-linked (GlcNAc...) asparagine glycosylation sites follow: Asn-968, Asn-975, and Asn-1000. Intrachain disulfides connect Cys-1096–Cys-1137, Cys-1143–Cys-1154, Cys-1148–Cys-1163, Cys-1165–Cys-1174, Cys-1181–Cys-1191, Cys-1186–Cys-1200, Cys-1202–Cys-1211, Cys-1218–Cys-1229, Cys-1223–Cys-1238, Cys-1240–Cys-1249, Cys-1259–Cys-1274, Cys-1268–Cys-1283, Cys-1285–Cys-1294, Cys-1301–Cys-1312, Cys-1306–Cys-1321, and Cys-1323–Cys-1332. In terms of domain architecture, EGF-like 15 spans 1139–1175 (QLNVCNSNPCLHGGNCEDIYSSYHCSCPLGWSGKHCE). The EGF-like 16; calcium-binding domain occupies 1177–1212 (NIDECFSNPCIHGNCSDRVAAYHCTCEPGYTGVNCE). Asn-1190 is a glycosylation site (N-linked (GlcNAc...) asparagine). 2 EGF-like domains span residues 1214-1250 (DIDN…KFCR) and 1255-1295 (PSTV…EWCE). Residues Asn-1243, Asn-1265, and Asn-1273 are each glycosylated (N-linked (GlcNAc...) asparagine). Positions 1297 to 1333 (DIDECASDPCVNGGLCQDLLNKFQCLCDVAFAGERCE) constitute an EGF-like 19; calcium-binding domain. A helical transmembrane segment spans residues 1348–1368 (IGSVTVALLLILLLAIVASVV). Over 1369–1406 (TSNKRATQGTYSPSRQEKEGSRVEMWNLMPPPAMERLI) the chain is Cytoplasmic. The interval 1370-1406 (SNKRATQGTYSPSRQEKEGSRVEMWNLMPPPAMERLI) is interaction with EPB41L5.

Belongs to the Crumbs protein family. Component of a complex composed of PALS1, CRB1 and EPB41L5. Within the complex, interacts (via intracellular domain) with PALS1 and EPB41L5 (via FERM domain). Forms a complex with MPP4 and PALS1. Interacts with MPDZ/MUPP1 and MPP4. Extensively glycosylated. Preferential expression in retina, also expressed in brain, testis, fetal brain and fetal eye. Expressed at the outer limiting membrane and apical to adherens junctions in the retina.

Its subcellular location is the apical cell membrane. It is found in the secreted. The protein localises to the cell projection. It localises to the cilium. The protein resides in the photoreceptor outer segment. Its subcellular location is the photoreceptor inner segment. Its function is as follows. Plays a role in photoreceptor morphogenesis in the retina. May maintain cell polarization and adhesion. The polypeptide is Protein crumbs homolog 1 (Homo sapiens (Human)).